The following is a 139-amino-acid chain: Aspartate 1-decarboxylase (139 aa).

Ser25 functions as the Schiff-base intermediate with substrate; via pyruvic acid in the catalytic mechanism. Residue Ser25 is modified to Pyruvic acid (Ser). Position 57 (Thr57) interacts with substrate. The active-site Proton donor is Tyr58. Substrate is bound at residue Gly73–Ala75. Positions Thr117–Arg139 are disordered.

It belongs to the PanD family. In terms of assembly, heterooctamer of four alpha and four beta subunits. Pyruvate serves as cofactor. Post-translationally, is synthesized initially as an inactive proenzyme, which is activated by self-cleavage at a specific serine bond to produce a beta-subunit with a hydroxyl group at its C-terminus and an alpha-subunit with a pyruvoyl group at its N-terminus.

It is found in the cytoplasm. It catalyses the reaction L-aspartate + H(+) = beta-alanine + CO2. Its pathway is cofactor biosynthesis; (R)-pantothenate biosynthesis; beta-alanine from L-aspartate: step 1/1. In terms of biological role, catalyzes the pyruvoyl-dependent decarboxylation of aspartate to produce beta-alanine. In Nocardioides sp. (strain ATCC BAA-499 / JS614), this protein is Aspartate 1-decarboxylase.